The sequence spans 458 residues: tRNA modification GTPase MnmE (458 aa).

The (6S)-5-formyl-5,6,7,8-tetrahydrofolate site is built by arginine 22, glutamate 85, and arginine 124. Residues glycine 220–phenylalanine 379 enclose the TrmE-type G domain. A K(+)-binding site is contributed by asparagine 230. GTP-binding positions include asparagine 230–serine 235, threonine 249–threonine 255, and aspartate 274–glycine 277. Position 234 (serine 234) interacts with Mg(2+). The K(+) site is built by threonine 249, isoleucine 251, and threonine 254. Residue threonine 255 coordinates Mg(2+). Lysine 458 provides a ligand contact to (6S)-5-formyl-5,6,7,8-tetrahydrofolate.

This sequence belongs to the TRAFAC class TrmE-Era-EngA-EngB-Septin-like GTPase superfamily. TrmE GTPase family. In terms of assembly, homodimer. Heterotetramer of two MnmE and two MnmG subunits. K(+) is required as a cofactor.

It localises to the cytoplasm. In terms of biological role, exhibits a very high intrinsic GTPase hydrolysis rate. Involved in the addition of a carboxymethylaminomethyl (cmnm) group at the wobble position (U34) of certain tRNAs, forming tRNA-cmnm(5)s(2)U34. The chain is tRNA modification GTPase MnmE from Shouchella clausii (strain KSM-K16) (Alkalihalobacillus clausii).